A 153-amino-acid chain; its full sequence is Melatonin receptor type 1A X2.0 (153 aa).

Over 1–12 (HSSWYNRLFSNS) the chain is Cytoplasmic. A helical transmembrane segment spans residues 13 to 33 (GTICYVGLVWVLALGAILPNL). Residues 34–57 (FVGSLRCDPRIFSCTFAQYVSSYY) lie on the Extracellular side of the membrane. The chain crosses the membrane as a helical span at residues 58–78 (TIAVVIFHFFLPIGVVSYCYL). At 79 to 112 (RIWVLVLNIRHRVKPDRHLHHQTWPYNIHGFITM) the chain is on the cytoplasmic side. The helical transmembrane segment at 113-133 (FVVFVLFAVCWGPLNIIGLTV) threads the bilayer. Residues 134-145 (AIYPPLGDSIPQ) are Extracellular-facing. The helical transmembrane segment at 146-153 (WLFVASYF) threads the bilayer.

The protein belongs to the G-protein coupled receptor 1 family.

Its subcellular location is the cell membrane. High affinity receptor for melatonin. The activity of this receptor is mediated by pertussis toxin sensitive G proteins that inhibits adenylate cyclase activity. This chain is Melatonin receptor type 1A X2.0, found in Xenopus laevis (African clawed frog).